The chain runs to 425 residues: Trigger factor (425 aa).

Residues 163-248 (GDTAVIDFEG…VHEIKTKELP (86 aa)) form the PPIase FKBP-type domain.

It belongs to the FKBP-type PPIase family. Tig subfamily.

The protein resides in the cytoplasm. The enzyme catalyses [protein]-peptidylproline (omega=180) = [protein]-peptidylproline (omega=0). Functionally, involved in protein export. Acts as a chaperone by maintaining the newly synthesized protein in an open conformation. Functions as a peptidyl-prolyl cis-trans isomerase. This is Trigger factor from Bacillus cereus (strain Q1).